Here is a 152-residue protein sequence, read N- to C-terminus: Nucleoside diphosphate kinase (152 aa).

Positions 10, 58, 86, 92, 103, and 113 each coordinate ATP. Catalysis depends on histidine 116, which acts as the Pros-phosphohistidine intermediate.

This sequence belongs to the NDK family. Mg(2+) is required as a cofactor.

The protein localises to the cytoplasm. It carries out the reaction a 2'-deoxyribonucleoside 5'-diphosphate + ATP = a 2'-deoxyribonucleoside 5'-triphosphate + ADP. The catalysed reaction is a ribonucleoside 5'-diphosphate + ATP = a ribonucleoside 5'-triphosphate + ADP. Its function is as follows. Major role in the synthesis of nucleoside triphosphates other than ATP. The ATP gamma phosphate is transferred to the NDP beta phosphate via a ping-pong mechanism, using a phosphorylated active-site intermediate. This chain is Nucleoside diphosphate kinase, found in Methanosphaera stadtmanae (strain ATCC 43021 / DSM 3091 / JCM 11832 / MCB-3).